The following is a 102-amino-acid chain: Monothiol glutaredoxin-S10 (102 aa).

Residues methionine 1–tryptophan 101 form the Glutaredoxin domain. Cysteine 21 provides a ligand contact to [2Fe-2S] cluster. A Responsive for interaction with TGA factors motif is present at residues alanine 99–leucine 102.

It belongs to the glutaredoxin family. CC-type subfamily.

The protein resides in the cytoplasm. It localises to the nucleus. In terms of biological role, may only reduce GSH-thiol disulfides, but not protein disulfides. The polypeptide is Monothiol glutaredoxin-S10 (GRXS10) (Arabidopsis thaliana (Mouse-ear cress)).